The sequence spans 887 residues: 3-hydroxy-3-methylglutaryl-coenzyme A reductase (887 aa).

The Cytoplasmic portion of the chain corresponds to 1–9 (MLSRLFRMH). A helical transmembrane segment spans residues 10 to 39 (GLFVASHPWEVIVGTVTLTICMMSMNMFTG). Topologically, residues 40–56 (NNKICGWNYECPKFEED) are lumenal. A helical transmembrane segment spans residues 57–78 (VLSSDIIILTITRCIAILYIYF). Positions 61–218 (DIIILTITRC…MTFFPACVSL (158 aa)) constitute an SSD domain. The INSIG-binding motif motif lies at 75–78 (YIYF). The Cytoplasmic portion of the chain corresponds to 79–89 (QFQNLRQLGSK). A Glycyl lysine isopeptide (Lys-Gly) (interchain with G-Cter in ubiquitin) cross-link involves residue K89. A helical transmembrane segment spans residues 90-114 (YILGIAGLFTIFSSFVFSTVVIHFL). The Lumenal segment spans residues 115–123 (DKELTGLNE). A helical transmembrane segment spans residues 124 to 149 (ALPFFLLLIDLSRASALAKFALSSNS). At 150–159 (QDEVRENIAR) the chain is on the cytoplasmic side. The helical transmembrane segment at 160-187 (GMAILGPTFTLDALVECLVIGVGTMSGV) threads the bilayer. Residues 188-191 (RQLE) are Lumenal-facing. The helical transmembrane segment at 192 to 220 (IMCCFGCMSVLANYFVFMTFFPACVSLVL) threads the bilayer. Topologically, residues 221–248 (ELSRESREGRPIWQLSHFARVLEEEENK) are cytoplasmic. K248 participates in a covalent cross-link: Glycyl lysine isopeptide (Lys-Gly) (interchain with G-Cter in ubiquitin). A helical membrane pass occupies residues 249–275 (PNPVTQRVKMIMSLGLVLVHAHSRWIA). Residues 276 to 314 (DPSPQNSTTEHSKVSLGLDEDVSKRIEPSVSLWQFYLSK) lie on the Lumenal side of the membrane. An N-linked (GlcNAc...) asparagine glycan is attached at N281. A helical transmembrane segment spans residues 315-339 (MISMDIEQVVTLSLAFLLAVKYIFF). The Cytoplasmic portion of the chain corresponds to 340-887 (EQAETESTLS…LQGTCTKKAA (548 aa)). Catalysis depends on charge relay system residues E558, K690, and D766. H865 functions as the Proton donor in the catalytic mechanism. Residue S871 is modified to Phosphoserine; by AMPK.

Belongs to the HMG-CoA reductase family. In terms of assembly, homotetramer. Homodimer. Interacts (via its SSD) with INSIG1; the interaction, accelerated by sterols, leads to the recruitment of HMGCR to AMFR/gp78 for its ubiquitination by the sterol-mediated ERAD pathway. Interacts with UBIAD1. In terms of processing, undergoes sterol-mediated ubiquitination and ER-associated degradation (ERAD). Accumulation of sterols in the endoplasmic reticulum (ER) membrane, triggers binding of the reductase to the ER membrane protein INSIG1 or INSIG2. The INSIG1 binding leads to the recruitment of the ubiquitin ligase, AMFR/gp78, RNF139 or RNF145, initiating ubiquitination of the reductase. The ubiquitinated reductase is then extracted from the ER membrane and delivered to cytosolic 26S proteosomes by a mechanism probably mediated by the ATPase Valosin-containing protein VCP/p97. The INSIG2-binding leads to the recruitment of the ubiquitin ligase RNF139, initiating ubiquitination of the reductase. Lys-248 is the main site of ubiquitination. Ubiquitination is enhanced by the presence of a geranylgeranylated protein. N-glycosylated. Deglycosylated by NGLY1 on release from the endoplasmic reticulum (ER) in a sterol-mediated manner. Post-translationally, phosphorylated. Phosphorylation at Ser-871 reduces the catalytic activity.

It is found in the endoplasmic reticulum membrane. The protein resides in the peroxisome membrane. It catalyses the reaction (R)-mevalonate + 2 NADP(+) + CoA = (3S)-3-hydroxy-3-methylglutaryl-CoA + 2 NADPH + 2 H(+). Its pathway is metabolic intermediate biosynthesis; (R)-mevalonate biosynthesis; (R)-mevalonate from acetyl-CoA: step 3/3. Its activity is regulated as follows. Regulated by a negative feedback mechanism through sterols and non-sterol metabolites derived from mevalonate. Phosphorylation at Ser-871 down-regulates the catalytic activity. Its function is as follows. Catalyzes the conversion of (3S)-hydroxy-3-methylglutaryl-CoA (HMG-CoA) to mevalonic acid, the rate-limiting step in the synthesis of cholesterol and other isoprenoids, thus plays a critical role in cellular cholesterol homeostasis. In Mesocricetus auratus (Golden hamster), this protein is 3-hydroxy-3-methylglutaryl-coenzyme A reductase (HMGCR).